Here is a 443-residue protein sequence, read N- to C-terminus: POU domain, class 3, transcription factor 3-B (443 aa).

Disordered regions lie at residues 21-40, 100-150, and 182-244; these read IVHS…VTSV, SPWS…AGAW, and NGML…PTSD. The segment covering 101–121 has biased composition (polar residues); sequence PWSSSPVGMTGSPQQQDVKNN. Residues 210–225 show a composition bias toward basic residues; sequence SHHHHHHHQHQHHQQA. The POU-specific domain maps to 238-312; that stretch reads EDTPTSDDLE…LLNKWLEEAD (75 aa). Position 317 is a phosphoserine (Ser317). The segment at residues 330 to 389 is a DNA-binding region (homeobox); it reads KRKKRTSIEVSVKGALESHFLKCPKPSAQEITSLADNLQLEKEVVRVWFCNRRQKEKRMT.

Belongs to the POU transcription factor family. Class-3 subfamily. In terms of tissue distribution, predominantly expressed in the central nervous system.

It is found in the nucleus. Its function is as follows. Transcription factor that may play important roles in patterning the embryonic brain. The polypeptide is POU domain, class 3, transcription factor 3-B (pou3f3b) (Danio rerio (Zebrafish)).